Consider the following 288-residue polypeptide: Phenazine biosynthesis-like domain-containing protein (288 aa).

E46 is a catalytic residue.

This sequence belongs to the PhzF family. In terms of assembly, interacts with UNRIP/MAWD.

This is Phenazine biosynthesis-like domain-containing protein (PBLD) from Homo sapiens (Human).